A 286-amino-acid polypeptide reads, in one-letter code: uncharacterized protein (286 aa).

The chain crosses the membrane as a helical span at residues 8 to 28; sequence PLSGFISSLIWWLLFFYLIMA.

This sequence to M.jannaschii MJ1495.

It is found in the membrane. This is an uncharacterized protein from Methanocaldococcus jannaschii (strain ATCC 43067 / DSM 2661 / JAL-1 / JCM 10045 / NBRC 100440) (Methanococcus jannaschii).